A 156-amino-acid chain; its full sequence is RNA polymerase sigma factor SigS (156 aa).

The Polymerase core binding motif lies at 29–44 (EYYQLLLIKMWQLSQI). A DNA-binding region (H-T-H motif) is located at residues 126-145 (QFEIAEIMSLSLSTIKLIKM).

This sequence belongs to the sigma-70 factor family.

Its function is as follows. Sigma factors are initiation factors that promote the attachment of RNA polymerase to specific initiation sites and are then released. Sigma-S contributes to the protection against external stress, thus playing a role in cellular fitness and survival. This chain is RNA polymerase sigma factor SigS (sigS), found in Staphylococcus aureus (strain Mu50 / ATCC 700699).